Reading from the N-terminus, the 415-residue chain is Tumor necrosis factor receptor superfamily member 3 (415 aa).

An N-terminal signal peptide occupies residues 1–30 (MRLPRASSPCGLAWGPLLLGLSGLLVASQP). The Extracellular portion of the chain corresponds to 31–223 (QLVPPYRIEN…NPPEPGAMLL (193 aa)). The N-linked (GlcNAc...) asparagine glycan is linked to asparagine 40. TNFR-Cys repeat units lie at residues 42 to 81 (TCWDQDKEYYEPMHDVCCSRCPPGEFVFAVCSRSQDTVCK), 82 to 124 (TCPH…KAEC), 125 to 170 (RCQP…VNCV), and 171 to 213 (PCKP…TICK). Disulfide bonds link cysteine 43–cysteine 58, cysteine 59–cysteine 72, cysteine 62–cysteine 80, cysteine 83–cysteine 98, cysteine 101–cysteine 116, cysteine 104–cysteine 124, cysteine 126–cysteine 132, cysteine 139–cysteine 150, cysteine 142–cysteine 169, and cysteine 172–cysteine 187. Asparagine 179 carries an N-linked (GlcNAc...) asparagine glycan. A helical membrane pass occupies residues 224-244 (LAILLSLVLFLLFTTVLACAW). Over 245 to 415 (MRHPSLCRKL…ETETLGCQDL (171 aa)) the chain is Cytoplasmic. The segment at 261–304 (HPEGEESPPCPAPRADPHFPDLAEPLLPMSGDLSPSPAGPPTAP) is disordered. Residue serine 315 is modified to Phosphoserine. Residues 361–399 (LGGTRGPGDPPAPPEPPYPTPEEGAPGPSELSTPYQEDG) are disordered. Residues 368–380 (GDPPAPPEPPYPT) show a composition bias toward pro residues.

As to quaternary structure, self-associates; dimerization and trimerization are promoted by lymphotoxin (LTA(3)). Associates with TRAF3. Associates with TRAF4. Associates with TRAF5.

It is found in the membrane. Functionally, receptor for the heterotrimeric lymphotoxin containing LTA and LTB, and for TNFS14/LIGHT. Activates NF-kappa-B signaling upon stimulation with lymphotoxin. Promotes apoptosis via TRAF3 and TRAF5. May play a role in the development of lymphoid organs. (Microbial infection) Plays a role in host defense against Zika virus infection. The protein is Tumor necrosis factor receptor superfamily member 3 (Ltbr) of Mus musculus (Mouse).